The chain runs to 753 residues: Subtilisin-like protease SBT3.17 (753 aa).

The signal sequence occupies residues 1 to 29 (MGNSFLIADTSSLVIGLLLILNGVFISAA). Residues 30 to 116 (KHYGLNKIHI…VVPSRVMRLK (87 aa)) constitute a propeptide, activation peptide. One can recognise an Inhibitor I9 domain in the interval 38–115 (HIVHLGAKQH…RVVPSRVMRL (78 aa)). N-linked (GlcNAc...) asparagine glycosylation occurs at Asn97. The Peptidase S8 domain maps to 120-603 (TFDYLGLLPT…GGLINPEKVT (484 aa)). Residue Asp150 is the Charge relay system of the active site. N-linked (GlcNAc...) asparagine glycosylation is present at Asn161. The active-site Charge relay system is His227. N-linked (GlcNAc...) asparagine glycosylation occurs at Asn369. Catalysis depends on Ser534, which acts as the Charge relay system. Residues Asn639, Asn704, and Asn737 are each glycosylated (N-linked (GlcNAc...) asparagine).

This sequence belongs to the peptidase S8 family.

The protein localises to the secreted. The sequence is that of Subtilisin-like protease SBT3.17 from Arabidopsis thaliana (Mouse-ear cress).